Consider the following 241-residue polypeptide: Chaperone protein FimC (241 aa).

Positions Met-1 to Ala-36 are cleaved as a signal peptide.

The protein belongs to the periplasmic pilus chaperone family.

Its subcellular location is the periplasm. In terms of biological role, required for the biogenesis of type 1 fimbriae. Binds and interact with FimH. This Escherichia coli (strain K12) protein is Chaperone protein FimC (fimC).